The chain runs to 586 residues: MSGPEVEDHISQKYDIKKRLGKGAYGIVWKAIDRKSGEIVAVKKIFDAFRNRTDAQRTFREIMFLQEFGEHPNIIKLLNVIRAQNDKDIYLVFEHMETDLHAVIKKGNLLKDIHMRYILYQLLKATKFIHSGNVIHRDQKPSNILLDGDCLVKLCDFGLARSLYQIQEDVGNPALTEYVATRWYRAPEILLASNRYTKGVDMWSVGCILGEMLLGKPLFPGTSTINQIERIMSIIEPPTHEDIVSIKSEYGASVISRMSSKHKVPMAELFPASCPREALDLLSKLLVFNPGKRLTAEEALEHPYVSRFHSPAREPALDYDVILPVDDDIQLSVAEYRNKLYEMILERKMNIRRQKRESLKESVSSSANGAKDRQDTDTSKTPAPPAGTNPAPQPTSSTVPQRAAIAAPNQPPAQKDSTQQSPKIKAPSSNPITHSTTHGSTEDWRTSHNKKAGQQGAAGTTAQEVRKEVESRSRTAPIGRARSFSHSQQARAAATNSALIRKDAPPTGTVSVAAVSARLNQRTAPIQGRDPRSAPRFGRKMFQGKTNVESAGDPKATLHSYTQAYGTISKAALQNLPQQGGAFKGK.

The Protein kinase domain maps to tyrosine 14–valine 305. ATP is bound by residues leucine 20–valine 28 and lysine 43. The active-site Proton acceptor is the aspartate 138. Disordered stretches follow at residues glutamine 354–proline 506 and asparagine 520–arginine 539. Pro residues predominate over residues proline 382–glutamine 393. Low complexity predominate over residues proline 400–glutamine 414. Positions lysine 415–glycine 439 are enriched in polar residues. Low complexity predominate over residues alanine 452–glutamine 463. Basic and acidic residues predominate over residues glutamate 464–serine 473. Positions phenylalanine 484–alanine 498 are enriched in polar residues.

In terms of assembly, interacts with dvl2.

The protein localises to the cytoplasm. It localises to the cytoskeleton. The protein resides in the cilium basal body. It is found in the cell projection. Its subcellular location is the cilium. The protein localises to the cell junction. The enzyme catalyses L-seryl-[protein] + ATP = O-phospho-L-seryl-[protein] + ADP + H(+). The catalysed reaction is L-threonyl-[protein] + ATP = O-phospho-L-threonyl-[protein] + ADP + H(+). Atypical MAPK protein that regulates ciliogenesis by phosphorylating rcsd1 through its binding with dvl2. The sequence is that of Mitogen-activated protein kinase 15 from Xenopus laevis (African clawed frog).